Reading from the N-terminus, the 512-residue chain is Ribonuclease Y (512 aa).

The chain crosses the membrane as a helical span at residues 3–23 (FQIILVVIISALVGLVIGFFI). The region spanning 202–265 (TVAVIPLPND…EVARLALERL (64 aa)) is the KH domain. The 94-residue stretch at 328 to 421 (VLKHSIEVCH…VQAADAISAA (94 aa)) folds into the HD domain.

This sequence belongs to the RNase Y family.

Its subcellular location is the cell membrane. Functionally, endoribonuclease that initiates mRNA decay. The protein is Ribonuclease Y of Desulforamulus reducens (strain ATCC BAA-1160 / DSM 100696 / MI-1) (Desulfotomaculum reducens).